A 166-amino-acid chain; its full sequence is Cyclin-dependent kinase 4 inhibitor D (166 aa).

Methionine 1 carries the post-translational modification N-acetylmethionine. ANK repeat units lie at residues phenylalanine 41–valine 69, serine 73–alanine 102, threonine 106–arginine 135, and threonine 138–leucine 166.

This sequence belongs to the CDKN2 cyclin-dependent kinase inhibitor family. In terms of assembly, interacts with CDK6.

The protein resides in the nucleus. The protein localises to the cytoplasm. Its function is as follows. Interacts strongly with CDK4 and CDK6 and inhibits them. The polypeptide is Cyclin-dependent kinase 4 inhibitor D (CDKN2D) (Bos taurus (Bovine)).